The chain runs to 278 residues: Thiazole synthase (278 aa).

Lys-109 serves as the catalytic Schiff-base intermediate with DXP. 1-deoxy-D-xylulose 5-phosphate-binding positions include Gly-170, 197-198, and 219-220; these read AG and NT.

It belongs to the ThiG family. In terms of assembly, homotetramer. Forms heterodimers with either ThiH or ThiS.

Its subcellular location is the cytoplasm. The enzyme catalyses [ThiS sulfur-carrier protein]-C-terminal-Gly-aminoethanethioate + 2-iminoacetate + 1-deoxy-D-xylulose 5-phosphate = [ThiS sulfur-carrier protein]-C-terminal Gly-Gly + 2-[(2R,5Z)-2-carboxy-4-methylthiazol-5(2H)-ylidene]ethyl phosphate + 2 H2O + H(+). Its pathway is cofactor biosynthesis; thiamine diphosphate biosynthesis. Catalyzes the rearrangement of 1-deoxy-D-xylulose 5-phosphate (DXP) to produce the thiazole phosphate moiety of thiamine. Sulfur is provided by the thiocarboxylate moiety of the carrier protein ThiS. In vitro, sulfur can be provided by H(2)S. The polypeptide is Thiazole synthase (Cupriavidus pinatubonensis (strain JMP 134 / LMG 1197) (Cupriavidus necator (strain JMP 134))).